Here is a 375-residue protein sequence, read N- to C-terminus: Probable L-tyrosine/L-aspartate decarboxylase (375 aa).

Lys-226 is modified (N6-(pyridoxal phosphate)lysine).

The protein belongs to the group II decarboxylase family. MfnA subfamily. Pyridoxal 5'-phosphate serves as cofactor.

The enzyme catalyses L-tyrosine + H(+) = tyramine + CO2. It carries out the reaction L-aspartate + H(+) = beta-alanine + CO2. It functions in the pathway cofactor biosynthesis; methanofuran biosynthesis. The protein operates within cofactor biosynthesis; coenzyme A biosynthesis. Catalyzes the decarboxylation of L-tyrosine to produce tyramine for methanofuran biosynthesis. Can also catalyze the decarboxylation of L-aspartate to produce beta-alanine for coenzyme A (CoA) biosynthesis. The sequence is that of Probable L-tyrosine/L-aspartate decarboxylase from Methanocella arvoryzae (strain DSM 22066 / NBRC 105507 / MRE50).